The primary structure comprises 136 residues: DUF35 domain-containing scaffold protein (136 aa).

Residues C25, C38, and C41 each contribute to the Zn(2+) site.

It belongs to the scaffold protein DUF35 family. Interacts with acetoacetyl-CoA thiolase and HMG-CoA synthase (HMGCS) that catalyzes the first and second step in the mevalonate pathway, respectively.

Its function is as follows. Functions as a scaffold to connect the acetoacetyl-CoA thiolase and HMG-CoA synthase (HMGCS) dimers in the channeling thiolase/HMGCS complex, which allows for efficient coupling of the endergonic thiolase reaction with the exergonic HMGCS reaction. This is DUF35 domain-containing scaffold protein from Pyrococcus furiosus (strain ATCC 43587 / DSM 3638 / JCM 8422 / Vc1).